We begin with the raw amino-acid sequence, 144 residues long: L-fucose mutarotase (144 aa).

The active-site Proton donor is the histidine 22. Residues aspartate 30, arginine 109, and 131–133 (YGN) each bind substrate.

This sequence belongs to the RbsD / FucU family. FucU mutarotase subfamily. As to quaternary structure, homodecamer.

It is found in the cytoplasm. The catalysed reaction is alpha-L-fucose = beta-L-fucose. Its pathway is carbohydrate metabolism; L-fucose metabolism. Its function is as follows. Involved in the anomeric conversion of L-fucose. This is L-fucose mutarotase from Histophilus somni (strain 2336) (Haemophilus somnus).